The sequence spans 344 residues: Fibronectin type 3 and ankyrin repeat domains 1 protein (344 aa).

The 98-residue stretch at Lys11 to Pro108 folds into the Fibronectin type-III domain. ANK repeat units follow at residues Ile109 to Val139, Phe143 to Leu172, Ser176 to Ala205, Gly209 to Val238, Ser243 to Ile273, and Asp277 to Val306.

In terms of assembly, interacts with COPS5; regulates the phosphorylation of JUN and the transcriptional activity of AP-1. Interacts with RYBP; may prevent the ubiquitin-mediated proteasomal degradation of FANK1. Polyubiquitinated. Polyubiquitination leads to proteasomal degradation. Mostly restricted to testis (at protein level), including mid to late pachytene spermatocytes (stages VI-X), diplotene spermatocytes (stage XI), meiotically dividing spermatocytes (stage XII) and spermatids in steps 1-14. Highest levels in late pachytene spermatocytes and spermatids in steps 1-9.

It is found in the nucleus. Its subcellular location is the cytoplasm. It localises to the cytosol. The protein localises to the cytoskeleton. The protein resides in the cilium basal body. It is found in the cell projection. Its subcellular location is the cilium. Through the activation of JUN and AP-1-mediated transcription, may regulate apoptosis. This chain is Fibronectin type 3 and ankyrin repeat domains 1 protein, found in Mus musculus (Mouse).